Reading from the N-terminus, the 161-residue chain is ATP synthase subunit b (161 aa).

Residues Ala-11 to Leu-31 traverse the membrane as a helical segment.

The protein belongs to the ATPase B chain family. In terms of assembly, F-type ATPases have 2 components, F(1) - the catalytic core - and F(0) - the membrane proton channel. F(1) has five subunits: alpha(3), beta(3), gamma(1), delta(1), epsilon(1). F(0) has three main subunits: a(1), b(2) and c(10-14). The alpha and beta chains form an alternating ring which encloses part of the gamma chain. F(1) is attached to F(0) by a central stalk formed by the gamma and epsilon chains, while a peripheral stalk is formed by the delta and b chains.

The protein resides in the cell membrane. Functionally, f(1)F(0) ATP synthase produces ATP from ADP in the presence of a proton or sodium gradient. F-type ATPases consist of two structural domains, F(1) containing the extramembraneous catalytic core and F(0) containing the membrane proton channel, linked together by a central stalk and a peripheral stalk. During catalysis, ATP synthesis in the catalytic domain of F(1) is coupled via a rotary mechanism of the central stalk subunits to proton translocation. Component of the F(0) channel, it forms part of the peripheral stalk, linking F(1) to F(0). This Buchnera aphidicola subsp. Acyrthosiphon pisum (strain APS) (Acyrthosiphon pisum symbiotic bacterium) protein is ATP synthase subunit b.